The primary structure comprises 315 residues: Deoxyribonuclease-1-like 1 (315 aa).

The first 29 residues, 1–29 (MDSSGGFQKHTCGHALLLLLLLLAGGAEA), serve as a signal peptide directing secretion. Active-site residues include glutamate 108 and histidine 159. The cysteines at positions 198 and 235 are disulfide-linked. Asparagine 272 carries an N-linked (GlcNAc...) asparagine glycan.

It belongs to the DNase I family.

The protein localises to the endoplasmic reticulum. The sequence is that of Deoxyribonuclease-1-like 1 (DNASE1L1) from Sus scrofa (Pig).